A 444-amino-acid chain; its full sequence is MTTRQPLYKSLYFQVIVAIAIGILLGHFYPQTGVALKPLGDGFIKLIKMVIAPIIFCTVVSGIAGMQNMKSVGKTGGYALLYFEIVSTIALLIGLVVVNVVQPGNGMHIDVSTLDASKVAAYVTAGKDQSIVGFILNVIPNTIVGAFANGDILQVLMFSVIFGFALHRLGAYGKPVLDFIDRFAHVMFNIINMIMKLAPIGALGAMAFTIGAYGVGSLVQLGQLMICFYITCVLFVLVVLGAICRAHGFSVLKLIRYIREELLIVLGTSSSESALPRMLIKMERLGAKKSVVGLVIPTGYSFNLDGTSIYLTMAAVFIAQATDTHMDITHQITLLLVLLLSSKGAAGVTGSGFIVLAATLSAVGHLPVAGLALILGIDRFMSEARALTNLVGNAVATVVVAKWVKELDEDQLQAELASGGRAISDTREEDDLGVAEGPTPTTVK.

Helical transmembrane passes span leucine 7–tyrosine 29, isoleucine 44–methionine 66, alanine 79–valine 101, isoleucine 143–alanine 165, valine 186–phenylalanine 208, leucine 221–isoleucine 243, valine 291–methionine 313, and phenylalanine 353–leucine 375. The segment at serine 418–lysine 444 is disordered.

It belongs to the dicarboxylate/amino acid:cation symporter (DAACS) (TC 2.A.23) family.

Its subcellular location is the cell inner membrane. Its function is as follows. Responsible for the transport of dicarboxylates such as succinate, fumarate, and malate from the periplasm across the inner membrane. This chain is C4-dicarboxylate transport protein, found in Pseudomonas chlororaphis (Pseudomonas aureofaciens).